The following is a 550-amino-acid chain: Luciferin 4-monooxygenase (550 aa).

A Microbody targeting signal motif is present at residues 548–550 (SKL).

The protein belongs to the ATP-dependent AMP-binding enzyme family. Requires Mg(2+) as cofactor.

It is found in the peroxisome. The enzyme catalyses firefly D-luciferin + ATP + O2 = firefly oxyluciferin + hnu + AMP + CO2 + diphosphate. Produces green light with a wavelength of 562 nm. The chain is Luciferin 4-monooxygenase from Photinus pyralis (Common eastern firefly).